A 388-amino-acid chain; its full sequence is 3-amino-5-hydroxybenzoate synthase (388 aa).

Lys-188 is modified (N6-(pyridoxal phosphate)lysine).

This sequence belongs to the degT/dnrJ/eryC1 family. In terms of assembly, homodimer. Can interact with RifL. It depends on pyridoxal 5'-phosphate as a cofactor.

It carries out the reaction 5-deoxy-5-amino-3-dehydroshikimate = 3-amino-5-hydroxybenzoate + H2O + H(+). The catalysed reaction is UDP-3-oxo-alpha-D-glucose + L-glutamine = UDP-alpha-D-kanosamine + 2-oxoglutaramate. It functions in the pathway antibiotic biosynthesis; rifamycin B biosynthesis. Its activity is regulated as follows. AHBA synthase activity is activated by 3-deoxy-D-arabinoheptulosonic acid 7-phosphate (DAHP), an intermediate in the shikimate pathway, and is irreversibly inhibited by gabaculine (5-amino-1,3-cyclohexadiene-1-carboxylate). Its function is as follows. Catalyzes the dehydration and aromatization of 5-amino-5-deoxy-3-dehydroshikimate (aminoDHS) to 3-amino-5-hydroxybenzoate (AHBA), a compound that then serves as the starter unit for the assembly of a polyketide during the biosynthesis of rifamycin B and other ansamycin antibiotics. Cannot utilize 5-deoxy-5-amino-3-dehydroquinate (aminoDHQ), 5-deoxy-5-aminoshikimate (aminoSA), quinate, 3-dehydroquinate, or 3-dehydroshikimate (DHS) as substrate. In a complex with RifL, RifK may have a second function in the AHBA pathway, acting as a transaminase introducing the nitrogen into the first pathway intermediate, UDP-3-keto-D-glucose, to give UDP-kanosamine. Appears to use glutamine as the nitrogen donor; NH(4)(+) or asparagine are 30% less effective as nitrogen donors and neither glutamate nor aspartate show activity. This chain is 3-amino-5-hydroxybenzoate synthase (rifK), found in Amycolatopsis mediterranei (strain S699) (Nocardia mediterranei).